Here is a 240-residue protein sequence, read N- to C-terminus: Ribonuclease PH (240 aa).

Residues arginine 87 and 125–127 each bind phosphate; that span reads GTR.

It belongs to the RNase PH family. In terms of assembly, homohexameric ring arranged as a trimer of dimers.

The enzyme catalyses tRNA(n+1) + phosphate = tRNA(n) + a ribonucleoside 5'-diphosphate. In terms of biological role, phosphorolytic 3'-5' exoribonuclease that plays an important role in tRNA 3'-end maturation. Removes nucleotide residues following the 3'-CCA terminus of tRNAs; can also add nucleotides to the ends of RNA molecules by using nucleoside diphosphates as substrates, but this may not be physiologically important. Probably plays a role in initiation of 16S rRNA degradation (leading to ribosome degradation) during starvation. In Pseudomonas fluorescens (strain ATCC BAA-477 / NRRL B-23932 / Pf-5), this protein is Ribonuclease PH.